Reading from the N-terminus, the 469-residue chain is Phosphoenolpyruvate carboxylase (469 aa).

It belongs to the PEPCase type 2 family. Homotetramer. Mg(2+) is required as a cofactor.

The catalysed reaction is oxaloacetate + phosphate = phosphoenolpyruvate + hydrogencarbonate. Catalyzes the irreversible beta-carboxylation of phosphoenolpyruvate (PEP) to form oxaloacetate (OAA), a four-carbon dicarboxylic acid source for the tricarboxylic acid cycle. The protein is Phosphoenolpyruvate carboxylase of Pyrococcus horikoshii (strain ATCC 700860 / DSM 12428 / JCM 9974 / NBRC 100139 / OT-3).